A 365-amino-acid polypeptide reads, in one-letter code: NAC domain-containing protein 37 (365 aa).

In terms of domain architecture, NAC spans 9-158 (VPPGFRFHPT…GWVVCRAFKK (150 aa)). Residues 109–164 (IGMRKTLVFYKGRAPNGKKSDWIMHEYRLESDENAPPQEEGWVVCRAFKKRATGQA) mediate DNA binding.

Belongs to the plant vascular related NAC-domain protein family. In terms of assembly, interacts with NAC030/VND7. Expressed in root metaxylem pole and in shoot pre-procambium and procambium. Present in root developing xylems. Specifically expressed in vessels but not in interfascicular fibers in stems.

The protein resides in the nucleus. Its function is as follows. Transcription activator that binds to the secondary wall NAC binding element (SNBE), 5'-(T/A)NN(C/T)(T/C/G)TNNNNNNNA(A/C)GN(A/C/T)(A/T)-3', in the promoter of target genes. Involved in xylem formation by promoting the expression of secondary wall-associated transcription factors and of genes involved in secondary wall biosynthesis and programmed cell death, genes driven by the secondary wall NAC binding element (SNBE). Triggers thickening of secondary walls. The protein is NAC domain-containing protein 37 of Arabidopsis thaliana (Mouse-ear cress).